A 125-amino-acid chain; its full sequence is MADLAKIVEDLSSLTVLEAAELAKLLEEKWGVSAAAAVAVAAGPAAGAGAAAVEEQTEFTVVLASAGDKKIEVIKEVRAITGLGLKEAKDLVEGAPKPVKEGATKDEAEKLKAQLEKAGAKVELK.

It belongs to the bacterial ribosomal protein bL12 family. In terms of assembly, homodimer. Part of the ribosomal stalk of the 50S ribosomal subunit. Forms a multimeric L10(L12)X complex, where L10 forms an elongated spine to which 2 to 4 L12 dimers bind in a sequential fashion. Binds GTP-bound translation factors.

Forms part of the ribosomal stalk which helps the ribosome interact with GTP-bound translation factors. Is thus essential for accurate translation. The sequence is that of Large ribosomal subunit protein bL12 from Methylorubrum extorquens (strain CM4 / NCIMB 13688) (Methylobacterium extorquens).